Reading from the N-terminus, the 195-residue chain is 3-isopropylmalate dehydratase small subunit (195 aa).

It belongs to the LeuD family. LeuD type 1 subfamily. In terms of assembly, heterodimer of LeuC and LeuD.

It carries out the reaction (2R,3S)-3-isopropylmalate = (2S)-2-isopropylmalate. The protein operates within amino-acid biosynthesis; L-leucine biosynthesis; L-leucine from 3-methyl-2-oxobutanoate: step 2/4. In terms of biological role, catalyzes the isomerization between 2-isopropylmalate and 3-isopropylmalate, via the formation of 2-isopropylmaleate. The polypeptide is 3-isopropylmalate dehydratase small subunit (Corynebacterium kroppenstedtii (strain DSM 44385 / JCM 11950 / CIP 105744 / CCUG 35717)).